A 451-amino-acid polypeptide reads, in one-letter code: Lysine histidine transporter-like 3 (451 aa).

Over 1–40 the chain is Cytoplasmic; sequence MKGIPSSSNQILNQDLVEDQSFELEDWLPITASRNANWYY. A helical membrane pass occupies residues 41–61; the sequence is SAFHNVTAIVGAGVLGLPYAM. Residues 62-63 are Extracellular-facing; it reads SE. A helical membrane pass occupies residues 64 to 84; sequence LGWGPGVVVLILSWVITLYTF. At 85 to 115 the chain is on the cytoplasmic side; it reads WQMIEMHEMFEGKRFDRYHELGQAAFGKKLG. A helical membrane pass occupies residues 116-136; sequence LYIVVPLQLLVETSACIVYMV. The Extracellular segment spans residues 137-159; it reads TGGESLKKIHQLSVGDYECRKLK. The chain crosses the membrane as a helical span at residues 160–177; the sequence is VRHFILIFASSQFVLSLL. The Cytoplasmic portion of the chain corresponds to 178–182; the sequence is KNFNS. The helical transmembrane segment at 183 to 203 threads the bilayer; it reads ISGVSLVAAVMSMSYSTIAWV. Topologically, residues 204–227 are extracellular; sequence ASLTKGVANNVEYGYKRRNNTSVP. Residues 228-248 form a helical membrane-spanning segment; the sequence is LAFLGALGEMAFAYAGHNVVL. At 249–269 the chain is on the cytoplasmic side; the sequence is EIQATIPSTPENPSKRPMWKG. The helical transmembrane segment at 270–290 threads the bilayer; that stretch reads AIVAYIIVAFCYFPVALVGFW. Over 291-309 the chain is Extracellular; it reads TFGNNVEENILKTLRGPKG. A helical membrane pass occupies residues 310–330; it reads LIIVANIFVIIHLMGSYQVYA. At 331–358 the chain is on the cytoplasmic side; the sequence is MPVFDMIESVMIKKWHFSPTRVLRFTIR. A helical membrane pass occupies residues 359-379; it reads WTFVAATMGIAVALPHFSALL. A topological domain (extracellular) is located at residue serine 380. The chain crosses the membrane as a helical span at residues 381 to 401; that stretch reads FFGGFIFAPTTYFIPCIIWLI. The Cytoplasmic portion of the chain corresponds to 402–413; the sequence is LKKPKRFSLSWC. The chain crosses the membrane as a helical span at residues 414 to 434; it reads INWICIILGVLVMIIAPIGGL. Residues 435-451 lie on the Extracellular side of the membrane; it reads AKLMNALKQPDSSCKST.

It belongs to the amino acid/polyamine transporter 2 family. Amino acid/auxin permease (AAAP) (TC 2.A.18.2) subfamily.

It localises to the cell membrane. In terms of biological role, amino acid transporter. The sequence is that of Lysine histidine transporter-like 3 from Arabidopsis thaliana (Mouse-ear cress).